A 251-amino-acid chain; its full sequence is Small ribosomal subunit protein uS2 (251 aa).

Belongs to the universal ribosomal protein uS2 family.

In Arthrospira platensis (Spirulina platensis), this protein is Small ribosomal subunit protein uS2 (rpsB).